The primary structure comprises 283 residues: Polyamine aminopropyltransferase (283 aa).

Residues 5-238 (TTWIDEYHKG…GIWSWTFASS (234 aa)) form the PABS domain. Gln-32 contributes to the S-methyl-5'-thioadenosine binding site. Residues His-63 and Asp-87 each contribute to the spermidine site. S-methyl-5'-thioadenosine contacts are provided by residues Glu-107 and 139–140 (DG). Catalysis depends on Asp-158, which acts as the Proton acceptor. 158-161 (DCSD) is a spermidine binding site.

Belongs to the spermidine/spermine synthase family. In terms of assembly, homodimer or homotetramer.

The protein resides in the cytoplasm. It catalyses the reaction S-adenosyl 3-(methylsulfanyl)propylamine + putrescine = S-methyl-5'-thioadenosine + spermidine + H(+). The protein operates within amine and polyamine biosynthesis; spermidine biosynthesis; spermidine from putrescine: step 1/1. Catalyzes the irreversible transfer of a propylamine group from the amino donor S-adenosylmethioninamine (decarboxy-AdoMet) to putrescine (1,4-diaminobutane) to yield spermidine. This Prochlorococcus marinus (strain AS9601) protein is Polyamine aminopropyltransferase.